We begin with the raw amino-acid sequence, 400 residues long: Aspartate aminotransferase (400 aa).

G37, W126, and N176 together coordinate L-aspartate. The residue at position 238 (K238) is an N6-(pyridoxal phosphate)lysine. An L-aspartate-binding site is contributed by R367.

This sequence belongs to the class-I pyridoxal-phosphate-dependent aminotransferase family. As to quaternary structure, homodimer. Requires pyridoxal 5'-phosphate as cofactor.

Its subcellular location is the cytoplasm. It carries out the reaction L-aspartate + 2-oxoglutarate = oxaloacetate + L-glutamate. Its function is as follows. Catalyzes the reversible conversion of aspartate and 2-oxoglutarate to glutamate and oxaloacetate. Has very weak prephenate aminotransferase activity. This is Aspartate aminotransferase from Musicola paradisiaca (strain Ech703) (Dickeya paradisiaca).